The primary structure comprises 135 residues: UPF0355 protein SH2586 (135 aa).

The disordered stretch occupies residues 105–135; it reads NSSHDEVEENNSAYEEIDITHYANESKGPKS.

The protein belongs to the UPF0355 family.

This is UPF0355 protein SH2586 from Staphylococcus haemolyticus (strain JCSC1435).